The primary structure comprises 21 residues: Venom peptide Ocy4 (21 aa).

Expressed by the venom gland.

It localises to the secreted. The protein is Venom peptide Ocy4 of Opisthacanthus cayaporum (South American scorpion).